Consider the following 342-residue polypeptide: MLDERARTLLKTLVEHYVADGQPVGSRALSKFSGLDLSPATIRNVMADLEEAGFVASPHTSAGRIPTARGYRLFVDSLLTVQPLEARQMGEMEEALHGRPAGQIIASASQLLSSLTHFAGVVIAPRRQSSRIRQIEFLSLSEKRILLIIVTADGDVQNRIVTTDKVYSPAELVSAANYLTQNFAGLDFEQIRHRLTVEIKQLRDDIKPLMALALDAGDAAMAENTTPYVISGERNLLDVEELSSNMKRLRELFDLFEQRSSLMRLLEISNSAEGVQIFIGGESGIATLDECSVIAAPYTVDGQVVGSVGVIGPTRMAYERVIPIVDITARLLSSALSYKSDN.

Belongs to the HrcA family.

Its function is as follows. Negative regulator of class I heat shock genes (grpE-dnaK-dnaJ and groELS operons). Prevents heat-shock induction of these operons. The chain is Heat-inducible transcription repressor HrcA from Dechloromonas aromatica (strain RCB).